Reading from the N-terminus, the 378-residue chain is Non-functional pseudokinase ZRK6 (378 aa).

In terms of domain architecture, Protein kinase spans 34–378 (DGKCNPIKNF…SNNRSQMSSI (345 aa)). Residues 40 to 48 (IKNFSYDQI) and Lys83 each bind ATP.

This sequence belongs to the protein kinase superfamily. Ser/Thr protein kinase family. ZRK subfamily. In terms of assembly, interacts with RPP13L4/ZAR1.

The protein is Non-functional pseudokinase ZRK6 of Arabidopsis thaliana (Mouse-ear cress).